Here is a 456-residue protein sequence, read N- to C-terminus: Protein FAM124B (456 aa).

Residues 262 to 313 (NGCLRGDTHPQDSSLNSVSTQRTLEPRSRRRSRSRRFKVHSLELPQPSGSWE) are disordered. The span at 272 to 284 (QDSSLNSVSTQRT) shows a compositional bias: polar residues. Residues 289–300 (SRRRSRSRRFKV) are compositionally biased toward basic residues.

The protein belongs to the FAM124 family. In terms of assembly, interacts with CHD7 and CHD8. As to expression, expressed strongly in lung, at slightly lower levels in heart, kidney, brain and testis, and weakly in liver (at protein level). In brain, highly expressed in cortex, hippocampus, dentate gyrus, caudate putamen and cerebellum (at protein level).

The protein resides in the nucleus. The protein is Protein FAM124B (Fam124b) of Mus musculus (Mouse).